Here is a 592-residue protein sequence, read N- to C-terminus: Aspartate--tRNA ligase (592 aa).

Glutamate 173 lines the L-aspartate pocket. Residues 197–200 (QLFK) form an aspartate region. Residue arginine 219 participates in L-aspartate binding. Residues 219 to 221 (RDE) and glutamine 228 each bind ATP. L-aspartate is bound at residue histidine 448. Glutamate 482 serves as a coordination point for ATP. Arginine 489 lines the L-aspartate pocket. 534–537 (GLDR) serves as a coordination point for ATP.

This sequence belongs to the class-II aminoacyl-tRNA synthetase family. Type 1 subfamily. Homodimer.

The protein resides in the cytoplasm. It catalyses the reaction tRNA(Asp) + L-aspartate + ATP = L-aspartyl-tRNA(Asp) + AMP + diphosphate. Its function is as follows. Catalyzes the attachment of L-aspartate to tRNA(Asp) in a two-step reaction: L-aspartate is first activated by ATP to form Asp-AMP and then transferred to the acceptor end of tRNA(Asp). The sequence is that of Aspartate--tRNA ligase from Shewanella baltica (strain OS155 / ATCC BAA-1091).